We begin with the raw amino-acid sequence, 430 residues long: Glutamate-1-semialdehyde 2,1-aminomutase (430 aa).

Lys-267 is subject to N6-(pyridoxal phosphate)lysine.

The protein belongs to the class-III pyridoxal-phosphate-dependent aminotransferase family. HemL subfamily. In terms of assembly, homodimer. It depends on pyridoxal 5'-phosphate as a cofactor.

The protein resides in the cytoplasm. It carries out the reaction (S)-4-amino-5-oxopentanoate = 5-aminolevulinate. It participates in porphyrin-containing compound metabolism; protoporphyrin-IX biosynthesis; 5-aminolevulinate from L-glutamyl-tRNA(Glu): step 2/2. This chain is Glutamate-1-semialdehyde 2,1-aminomutase, found in Lawsonia intracellularis (strain PHE/MN1-00).